The chain runs to 405 residues: S-adenosylmethionine synthase (405 aa).

ATP is bound at residue 139-144 (GQGSVD).

The protein belongs to the AdoMet synthase 2 family. It depends on Mg(2+) as a cofactor.

It carries out the reaction L-methionine + ATP + H2O = S-adenosyl-L-methionine + phosphate + diphosphate. Its pathway is amino-acid biosynthesis; S-adenosyl-L-methionine biosynthesis; S-adenosyl-L-methionine from L-methionine: step 1/1. In terms of biological role, catalyzes the formation of S-adenosylmethionine from methionine and ATP. This is S-adenosylmethionine synthase from Thermococcus gammatolerans (strain DSM 15229 / JCM 11827 / EJ3).